The sequence spans 232 residues: 5'-methylthioadenosine/S-adenosylhomocysteine nucleosidase (232 aa).

Glu-12 (proton acceptor) is an active-site residue. Substrate-binding positions include Gly-78, Met-153, and 174-175 (ME). Asp-198 functions as the Proton donor in the catalytic mechanism.

It belongs to the PNP/UDP phosphorylase family. MtnN subfamily.

The enzyme catalyses S-adenosyl-L-homocysteine + H2O = S-(5-deoxy-D-ribos-5-yl)-L-homocysteine + adenine. It carries out the reaction S-methyl-5'-thioadenosine + H2O = 5-(methylsulfanyl)-D-ribose + adenine. It catalyses the reaction 5'-deoxyadenosine + H2O = 5-deoxy-D-ribose + adenine. It functions in the pathway amino-acid biosynthesis; L-methionine biosynthesis via salvage pathway; S-methyl-5-thio-alpha-D-ribose 1-phosphate from S-methyl-5'-thioadenosine (hydrolase route): step 1/2. Its function is as follows. Catalyzes the irreversible cleavage of the glycosidic bond in both 5'-methylthioadenosine (MTA) and S-adenosylhomocysteine (SAH/AdoHcy) to adenine and the corresponding thioribose, 5'-methylthioribose and S-ribosylhomocysteine, respectively. Also cleaves 5'-deoxyadenosine, a toxic by-product of radical S-adenosylmethionine (SAM) enzymes, into 5-deoxyribose and adenine. This chain is 5'-methylthioadenosine/S-adenosylhomocysteine nucleosidase, found in Hydrogenovibrio crunogenus (strain DSM 25203 / XCL-2) (Thiomicrospira crunogena).